The chain runs to 771 residues: Transcription factor TAS2 (771 aa).

The segment at Arg33–Ser53 is disordered. Residues Pro42–Gln51 are compositionally biased toward low complexity. Residues Cys54–Cys80 constitute a DNA-binding region (zn(2)-C6 fungal-type). Residues Ala125–Glu150 form a disordered region.

The protein localises to the nucleus. Transcription factor; part of the gene cluster that mediates the biosynthesis of the toxin tenuazonic acid (TeA), an inhibitor of protein biosynthesis on ribosomes by suppressing the release of new protein. Directly regulates the expression of the hybrid PKS-NRPS synthetase TAS1 and the subsequent production of TeA. The chain is Transcription factor TAS2 from Pyricularia oryzae (strain 70-15 / ATCC MYA-4617 / FGSC 8958) (Rice blast fungus).